Reading from the N-terminus, the 212-residue chain is Peptide methionine sulfoxide reductase MsrA (212 aa).

Residue Cys52 is part of the active site.

This sequence belongs to the MsrA Met sulfoxide reductase family.

The enzyme catalyses L-methionyl-[protein] + [thioredoxin]-disulfide + H2O = L-methionyl-(S)-S-oxide-[protein] + [thioredoxin]-dithiol. The catalysed reaction is [thioredoxin]-disulfide + L-methionine + H2O = L-methionine (S)-S-oxide + [thioredoxin]-dithiol. In terms of biological role, has an important function as a repair enzyme for proteins that have been inactivated by oxidation. Catalyzes the reversible oxidation-reduction of methionine sulfoxide in proteins to methionine. The sequence is that of Peptide methionine sulfoxide reductase MsrA from Escherichia coli O127:H6 (strain E2348/69 / EPEC).